The primary structure comprises 433 residues: Trigger factor (433 aa).

Residues 166–251 (GDFAVIDFEG…LHEIQERAKP (86 aa)) enclose the PPIase FKBP-type domain.

It belongs to the FKBP-type PPIase family. Tig subfamily.

It is found in the cytoplasm. The enzyme catalyses [protein]-peptidylproline (omega=180) = [protein]-peptidylproline (omega=0). In terms of biological role, involved in protein export. Acts as a chaperone by maintaining the newly synthesized protein in an open conformation. Functions as a peptidyl-prolyl cis-trans isomerase. The sequence is that of Trigger factor from Aliarcobacter butzleri (strain RM4018) (Arcobacter butzleri).